Reading from the N-terminus, the 209-residue chain is Superoxide dismutase [Mn/Fe] (209 aa).

4 residues coordinate Fe(3+): H38, H90, D172, and H176. Mn(2+) contacts are provided by H38, H90, D172, and H176.

This sequence belongs to the iron/manganese superoxide dismutase family. Mn(2+) serves as cofactor. Requires Fe(3+) as cofactor.

The catalysed reaction is 2 superoxide + 2 H(+) = H2O2 + O2. Its function is as follows. Destroys superoxide anion radicals which are normally produced within the cells and which are toxic to biological systems. Catalyzes the dismutation of superoxide anion radicals into O2 and H2O2 by successive reduction and oxidation of the transition metal ion at the active site. The sequence is that of Superoxide dismutase [Mn/Fe] (sodB) from Rickettsia prowazekii (strain Madrid E).